The following is a 123-amino-acid chain: Transmembrane protein 254 (123 aa).

A2 carries the post-translational modification N-acetylalanine. 3 helical membrane-spanning segments follow: residues 15-35 (LFWF…VFWP), 61-81 (LCNG…YAIV), and 95-115 (LLWF…LIAY).

The protein localises to the membrane. This chain is Transmembrane protein 254 (TMEM254), found in Pongo abelii (Sumatran orangutan).